A 486-amino-acid polypeptide reads, in one-letter code: Cardiolipin synthase A (486 aa).

2 helical membrane passes run 3 to 23 and 38 to 58; these read TFYT…IAGV and MAWL…YLSF. 2 PLD phosphodiesterase domains span residues 219-246 and 399-426; these read MDLR…VDPR and EGGL…DMRS. Catalysis depends on residues histidine 224, lysine 226, aspartate 231, histidine 404, lysine 406, and aspartate 411.

Belongs to the phospholipase D family. Cardiolipin synthase subfamily. ClsA sub-subfamily.

It localises to the cell inner membrane. It carries out the reaction 2 a 1,2-diacyl-sn-glycero-3-phospho-(1'-sn-glycerol) = a cardiolipin + glycerol. Functionally, catalyzes the reversible phosphatidyl group transfer from one phosphatidylglycerol molecule to another to form cardiolipin (CL) (diphosphatidylglycerol) and glycerol. The polypeptide is Cardiolipin synthase A (Yersinia pseudotuberculosis serotype O:1b (strain IP 31758)).